The primary structure comprises 290 residues: Shikimate kinase (290 aa).

81–91 contributes to the ATP binding site; the sequence is PIASGLKSSSA.

Belongs to the GHMP kinase family. Archaeal shikimate kinase subfamily.

The protein resides in the cytoplasm. It catalyses the reaction shikimate + ATP = 3-phosphoshikimate + ADP + H(+). It functions in the pathway metabolic intermediate biosynthesis; chorismate biosynthesis; chorismate from D-erythrose 4-phosphate and phosphoenolpyruvate: step 5/7. The sequence is that of Shikimate kinase from Methanocella arvoryzae (strain DSM 22066 / NBRC 105507 / MRE50).